Here is a 1454-residue protein sequence, read N- to C-terminus: Alpha-2-macroglobulin-like protein 1 (1454 aa).

The first 17 residues, 1–17, serve as a signal peptide directing secretion; the sequence is MWAQLLLGMLALSPAIA. Residues Cys-40 and Cys-78 are joined by a disulfide bond. Asn-120 carries N-linked (GlcNAc...) asparagine glycosylation. 2 cysteine pairs are disulfide-bonded: Cys-241–Cys-291 and Cys-259–Cys-279. N-linked (GlcNAc...) asparagine glycosylation is found at Asn-281 and Asn-409. Cystine bridges form between Cys-464–Cys-557, Cys-589–Cys-769, Cys-819–Cys-847, Cys-845–Cys-881, Cys-919–Cys-1307, Cys-1075–Cys-1123, and Cys-1338–Cys-1453. The interval 695-726 is bait region; it reads SHRSPEYSTAMGAGGGHPEAFESSTPLHQAED. A glycan (N-linked (GlcNAc...) asparagine) is linked at Asn-857. The isoglutamyl cysteine thioester (Cys-Gln) cross-link spans 970–973; it reads CGEQ. Asn-1020 carries N-linked (GlcNAc...) asparagine glycosylation.

Belongs to the protease inhibitor I39 (alpha-2-macroglobulin) family. In terms of assembly, monomer. In the epidermis, expressed predominantly in the granular layer at the apical edge of keratinocytes (at protein level). Also detected in placenta, testis and thymus but not in epithelia of kidney, lung, small intestine or colon.

The protein resides in the secreted. Functionally, is able to inhibit all four classes of proteinases by a unique 'trapping' mechanism. This protein has a peptide stretch, called the 'bait region' which contains specific cleavage sites for different proteinases. When a proteinase cleaves the bait region, a conformational change is induced in the protein which traps the proteinase. The entrapped enzyme remains active against low molecular weight substrates (activity against high molecular weight substrates is greatly reduced). Following cleavage in the bait region a thioester bond is hydrolyzed and mediates the covalent binding of the protein to the proteinase. Displays inhibitory activity against chymotrypsin, papain, thermolysin, subtilisin A and, to a lesser extent, elastase but not trypsin. May play an important role during desquamation by inhibiting extracellular proteases. The protein is Alpha-2-macroglobulin-like protein 1 of Homo sapiens (Human).